A 236-amino-acid chain; its full sequence is UPF0280 protein Mlab_0453 (236 aa).

It belongs to the UPF0280 family.

The chain is UPF0280 protein Mlab_0453 from Methanocorpusculum labreanum (strain ATCC 43576 / DSM 4855 / Z).